Consider the following 152-residue polypeptide: Xanthine-guanine phosphoribosyltransferase (152 aa).

5-phospho-alpha-D-ribose 1-diphosphate contacts are provided by residues 37-38 (RG), Arg69, and 88-96 (DDLVDTGGT). Arg69 contacts GMP. Residue Asp89 coordinates Mg(2+). Guanine-binding residues include Asp92 and Ile135. Positions 92 and 135 each coordinate xanthine. GMP contacts are provided by residues 92 to 96 (DTGGT) and 134 to 135 (WI).

The protein belongs to the purine/pyrimidine phosphoribosyltransferase family. XGPT subfamily. In terms of assembly, homotetramer. The cofactor is Mg(2+).

It is found in the cell inner membrane. The enzyme catalyses GMP + diphosphate = guanine + 5-phospho-alpha-D-ribose 1-diphosphate. It catalyses the reaction XMP + diphosphate = xanthine + 5-phospho-alpha-D-ribose 1-diphosphate. It carries out the reaction IMP + diphosphate = hypoxanthine + 5-phospho-alpha-D-ribose 1-diphosphate. The protein operates within purine metabolism; GMP biosynthesis via salvage pathway; GMP from guanine: step 1/1. It functions in the pathway purine metabolism; XMP biosynthesis via salvage pathway; XMP from xanthine: step 1/1. Purine salvage pathway enzyme that catalyzes the transfer of the ribosyl-5-phosphate group from 5-phospho-alpha-D-ribose 1-diphosphate (PRPP) to the N9 position of the 6-oxopurines guanine and xanthine to form the corresponding ribonucleotides GMP (guanosine 5'-monophosphate) and XMP (xanthosine 5'-monophosphate), with the release of PPi. To a lesser extent, also acts on hypoxanthine. This chain is Xanthine-guanine phosphoribosyltransferase, found in Pectobacterium atrosepticum (strain SCRI 1043 / ATCC BAA-672) (Erwinia carotovora subsp. atroseptica).